Here is a 425-residue protein sequence, read N- to C-terminus: tRNA(Ile)-lysidine synthase (425 aa).

Residue 27–32 participates in ATP binding; it reads SGGLDS.

This sequence belongs to the tRNA(Ile)-lysidine synthase family.

The protein localises to the cytoplasm. The catalysed reaction is cytidine(34) in tRNA(Ile2) + L-lysine + ATP = lysidine(34) in tRNA(Ile2) + AMP + diphosphate + H(+). Ligates lysine onto the cytidine present at position 34 of the AUA codon-specific tRNA(Ile) that contains the anticodon CAU, in an ATP-dependent manner. Cytidine is converted to lysidine, thus changing the amino acid specificity of the tRNA from methionine to isoleucine. The polypeptide is tRNA(Ile)-lysidine synthase (Streptococcus gordonii (strain Challis / ATCC 35105 / BCRC 15272 / CH1 / DL1 / V288)).